A 212-amino-acid chain; its full sequence is Methylthioribulose-1-phosphate dehydratase (212 aa).

The Zn(2+) site is built by His-97 and His-99.

The protein belongs to the aldolase class II family. MtnB subfamily. As to quaternary structure, homotetramer. The cofactor is Zn(2+).

The catalysed reaction is 5-(methylsulfanyl)-D-ribulose 1-phosphate = 5-methylsulfanyl-2,3-dioxopentyl phosphate + H2O. The protein operates within amino-acid biosynthesis; L-methionine biosynthesis via salvage pathway; L-methionine from S-methyl-5-thio-alpha-D-ribose 1-phosphate: step 2/6. Functionally, catalyzes the dehydration of methylthioribulose-1-phosphate (MTRu-1-P) into 2,3-diketo-5-methylthiopentyl-1-phosphate (DK-MTP-1-P). This Bacillus mycoides (strain KBAB4) (Bacillus weihenstephanensis) protein is Methylthioribulose-1-phosphate dehydratase.